The chain runs to 247 residues: MNPLLILAFLGAAVATPTDDDDKIVGGYTCEENSVPYQVSLNAGYHFCGGSLISDQWVVSAAHCYKSRIQVRLGEYNIDVLEGNEQFINSAKVIRHPNYNSWILDNDIMLIKLSSPAVLNARVATISLPRACAAPGTQCLISGWGNTLSSGTNYPELLQCLDAPILTQAQCEASYPGQITENMICAGFLEGGKDSCQGDSGGPVVCNGELQGIVSWGYGCAQKNKPGVYTKVCNFVDWIQSTIAANS.

The signal sequence occupies residues 1–15; it reads MNPLLILAFLGAAVA. Residues 16-23 constitute a propeptide, activation peptide; that stretch reads TPTDDDDK. The Peptidase S1 domain occupies 24–244; the sequence is IVGGYTCEEN…FVDWIQSTIA (221 aa). 6 disulfide bridges follow: Cys-30-Cys-160, Cys-48-Cys-64, Cys-132-Cys-233, Cys-139-Cys-206, Cys-171-Cys-185, and Cys-196-Cys-220. The active-site Charge relay system is His-63. Ca(2+) contacts are provided by Glu-75, Asn-77, Val-80, and Glu-85. Residue Asp-107 is the Charge relay system of the active site. Ser-200 serves as the catalytic Charge relay system.

This sequence belongs to the peptidase S1 family. Requires Ca(2+) as cofactor.

Its subcellular location is the secreted. The protein localises to the extracellular space. It catalyses the reaction Preferential cleavage: Arg-|-Xaa, Lys-|-Xaa.. The polypeptide is Anionic trypsin (Canis lupus familiaris (Dog)).